Here is a 284-residue protein sequence, read N- to C-terminus: Shikimate dehydrogenase (NADP(+)) (284 aa).

Residues 20–22 (SIS) and Ser67 each bind shikimate. The Proton acceptor role is filled by Lys71. NADP(+) is bound at residue Asp83. Residues Asn92 and Asp107 each contribute to the shikimate site. NADP(+) is bound by residues 129-133 (GAGGA) and Ile227. Tyr229 contributes to the shikimate binding site. Position 250 (Gly250) interacts with NADP(+).

It belongs to the shikimate dehydrogenase family. As to quaternary structure, homodimer.

The enzyme catalyses shikimate + NADP(+) = 3-dehydroshikimate + NADPH + H(+). Its pathway is metabolic intermediate biosynthesis; chorismate biosynthesis; chorismate from D-erythrose 4-phosphate and phosphoenolpyruvate: step 4/7. Functionally, involved in the biosynthesis of the chorismate, which leads to the biosynthesis of aromatic amino acids. Catalyzes the reversible NADPH linked reduction of 3-dehydroshikimate (DHSA) to yield shikimate (SA). This is Shikimate dehydrogenase (NADP(+)) from Streptococcus pneumoniae serotype 2 (strain D39 / NCTC 7466).